Here is a 1905-residue protein sequence, read N- to C-terminus: von Willebrand factor A domain-containing protein 8 (1905 aa).

The N-terminal 45 residues, 1-45 (MQSRLLLLGAPGGLGDVASRRVRLLLRQVLRGRPGGDQQRLEVRL), are a transit peptide targeting the mitochondrion. Residues 1–260 (MQSRLLLLGA…PLDPPLRSRF (260 aa)) form an interaction with PEX7 region. 446 to 453 (GGKGCGKT) lines the ATP pocket. Basic and acidic residues predominate over residues 1541 to 1560 (ERDSNEDVSDPKHGKEDPDN). The tract at residues 1541–1583 (ERDSNEDVSDPKHGKEDPDNMPHVGGNTWAGGTGGRDTAGLGG) is disordered. A compositionally biased stretch (gly residues) spans 1568–1583 (TWAGGTGGRDTAGLGG). The region spanning 1714–1896 (RLRLVVDVSG…KKIPQILQQI (183 aa)) is the VWFA domain.

As to quaternary structure, monomer. Interacts with PEX7. Interacts with PEX5 in a PEX7-dependent manner. As to expression, isoform 1 is predominantly expressed in liver, kidney, pancreas, heart, and skeletal muscle (at protein level).

The protein resides in the mitochondrion. Its function is as follows. Exhibits ATPase activity in vitro. The sequence is that of von Willebrand factor A domain-containing protein 8 (Vwa8) from Mus musculus (Mouse).